Reading from the N-terminus, the 294-residue chain is Proline iminopeptidase (294 aa).

The AB hydrolase-1 domain occupies 28-278 (PLLLLHGGPG…GCGHMPFVQE (251 aa)). Catalysis depends on serine 106, which acts as the Nucleophile. Residue aspartate 245 is part of the active site. Histidine 272 (proton donor) is an active-site residue.

This sequence belongs to the peptidase S33 family. In terms of assembly, homotrimer.

The protein localises to the cell envelope. It carries out the reaction Release of N-terminal proline from a peptide.. Inhibited by 3,4-DCI, but no significant effect on enzyme activity by pepstatin A, E-64, 1,10-phenanthroline or EDTA. Functionally, releases the N-terminal proline from various substrates. Cleaves Pro-betaNA (L-prolyl-beta-naphthylamide) effectively. The polypeptide is Proline iminopeptidase (pip) (Lactobacillus delbrueckii subsp. lactis).